The chain runs to 179 residues: Gut granule loss protein 3 (179 aa).

The disordered stretch occupies residues aspartate 40–serine 59. Polar residues predominate over residues aspartate 42–threonine 54.

This is Gut granule loss protein 3 (glo-3) from Caenorhabditis elegans.